Consider the following 610-residue polypeptide: MNSQDLKKRQEKIRNFSIIAHIDHGKSTLADRILEKTETVSSREMQAQLLDSMDLERERGITIKLNAIELNYTARDGETYIFHLIDTPGHVDFTYEVSRSLAACEGAILVVDAAQGIEAQTLANVYLALDNDLEILPVINKIDLPAADPERVCHEVEDVIGLDASEAVLASAKAGIGIEEILEQIVEKVPAPTGDVDAPLQALIFDSVYDAYRGVILQVRIVNGIVKPGDKIQMMSNGKTFDVTEVGIFTPKAVGRDFLATGDVGYVAASIKTVADTRVGDTVTLANNPAKEALHGYKQMNPMVFAGIYPIESNKYNDLREALEKLQLNDASLQFEPETSQALGFGFRCGFLGLLHMDVIQERLEREFNIDLIMTAPSVVYHVHTTDEDMIEVSNPSEFPDPTRVAFIEEPYVKAQIMVPQEFVGAVMELSQRKRGDFVTMDYIDDNRVNVIYQIPLAEIVFDFFDKLKSSTRGYASFDYDMSEYRRSQLVKMDILLNGDKVDALSFIVHKEFAYERGKIIVEKLKKIIPRQQFEVPIQAAIGQKIVARSDIKALRKNVLAKCYGGDVSRKRKLLEKQKAGKKRMKAIGSVEVPQEAFLSVLSMDDDAKK.

The region spanning 11-193 (EKIRNFSIIA…QIVEKVPAPT (183 aa)) is the tr-type G domain. GTP-binding positions include 23–28 (DHGKST) and 140–143 (NKID).

The protein belongs to the TRAFAC class translation factor GTPase superfamily. Classic translation factor GTPase family. LepA subfamily.

It is found in the cell membrane. The catalysed reaction is GTP + H2O = GDP + phosphate + H(+). In terms of biological role, required for accurate and efficient protein synthesis under certain stress conditions. May act as a fidelity factor of the translation reaction, by catalyzing a one-codon backward translocation of tRNAs on improperly translocated ribosomes. Back-translocation proceeds from a post-translocation (POST) complex to a pre-translocation (PRE) complex, thus giving elongation factor G a second chance to translocate the tRNAs correctly. Binds to ribosomes in a GTP-dependent manner. The chain is Elongation factor 4 from Streptococcus pyogenes serotype M3 (strain ATCC BAA-595 / MGAS315).